The sequence spans 47 residues: GVPCRCDSDGPSVHGNTLSGTVWVGSCASGWHKCNTEHNIFHECCKE.

Residue Pro3 is modified to Hydroxyproline. 3 disulfide bridges follow: Cys4/Cys44, Cys6/Cys34, and Cys27/Cys45.

The protein belongs to the sea anemone sodium channel inhibitory toxin family. Type I subfamily.

The protein localises to the secreted. The protein resides in the nematocyst. In terms of biological role, binds voltage-dependently at site 3 of sodium channels (Nav) and inhibits the inactivation, thereby blocking neuronal transmission. In Condylactis gigantea (Giant Caribbean anemone), this protein is Delta-actitoxin-Cgg1b.